The sequence spans 711 residues: Denticleless protein homolog B (711 aa).

WD repeat units lie at residues 47-89 (GRAV…MQRL), 96-135 (AHTNAVFDIAWVPGEHKLVTASGDQTAKLWDVKAGELIGE), and 138-178 (GHQC…KDGF). Residues 168–171 (WDTR) carry the DDB1-binding motif motif. Positions 197–204 (PSKVKKRK) match the Nuclear localization signal motif. 4 WD repeats span residues 215-254 (DSQQSVTVVIFQDEYTVISAGAVDGVVKIWDLRKNYSTYR), 270-309 (TRKLGYSSLVLDPTGTNLFASCTDDNVYMFNATGLKTDPV), 314-355 (GHQN…AAPI), and 359-398 (GHCQEVTSVAWCQSDFTKIATCSDDNTVRIWRLNRSSEDS). A DDB1-binding motif motif is present at residues 244–247 (WDLR). Disordered regions lie at residues 473 to 524 (QTPK…AFTP) and 601 to 698 (EFDQ…TPGS). Polar residues-rich tracts occupy residues 504–516 (TPKSSKGTDSKTP) and 606–627 (LSPSPSTSLHMNATDNPPTLSP). The segment covering 631–642 (MKSDFVDKENSS) has biased composition (basic and acidic residues). Positions 658-675 (DNSSPQFKSSSSPSSRNS) are enriched in low complexity. Positions 684-697 (NAPNSPVSVPTTPG) are enriched in polar residues.

The protein belongs to the WD repeat cdt2 family. As to quaternary structure, component of the DCX(DTL) E3 ubiquitin ligase complex, at least composed of cul4 (cul4a or cul4b), ddb1, dtl/cdt2 and rbx1.

The protein localises to the nucleus. It localises to the cytoplasm. It is found in the cytoskeleton. Its subcellular location is the microtubule organizing center. The protein resides in the centrosome. The protein localises to the chromosome. Its pathway is protein modification; protein ubiquitination. Functionally, substrate-specific adapter of a DCX (DDB1-CUL4-X-box) E3 ubiquitin-protein ligase complex required for cell cycle control, DNA damage response and translesion DNA synthesis. The DCX(DTL) complex, also named CRL4(CDT2) complex, mediates the polyubiquitination and subsequent degradation of CDT1, CDKN1A/p21(CIP1), KMT5A and SDE2. CDT1 degradation in response to DNA damage is necessary to ensure proper cell cycle regulation of DNA replication. CDKN1A/p21(CIP1) degradation during S phase or following UV irradiation is essential to control replication licensing. KMT5A degradation is also important for a proper regulation of mechanisms such as TGF-beta signaling, cell cycle progression, DNA repair and cell migration. Most substrates require their interaction with PCNA for their polyubiquitination: substrates interact with PCNA via their PIP-box, and those containing the 'K+4' motif in the PIP box, recruit the DCX(DTL) complex, leading to their degradation. In undamaged proliferating cells, the DCX(DTL) complex also promotes the 'Lys-164' monoubiquitination of PCNA, thereby being involved in PCNA-dependent translesion DNA synthesis. May play a role in the regulation of the circadian clock. The chain is Denticleless protein homolog B (dtl-b) from Xenopus laevis (African clawed frog).